The chain runs to 401 residues: uncharacterized protein (401 aa).

It belongs to the serpin family.

May act as an inhibitor for a host chymotrypsin-like protease. This is an uncharacterized protein from Acanthamoeba polyphaga mimivirus (APMV).